The following is a 176-amino-acid chain: NAD(P)H-quinone oxidoreductase subunit 6, chloroplastic (176 aa).

5 helical membrane passes run 10–30, 33–53, 60–80, 95–115, and 152–172; these read ILVL…VLLT, IYSA…YFLL, VAQL…AVMF, IGDG…MTTI, and FYLP…GAIT.

Belongs to the complex I subunit 6 family. As to quaternary structure, NDH is composed of at least 16 different subunits, 5 of which are encoded in the nucleus.

It localises to the plastid. The protein localises to the chloroplast thylakoid membrane. The enzyme catalyses a plastoquinone + NADH + (n+1) H(+)(in) = a plastoquinol + NAD(+) + n H(+)(out). It carries out the reaction a plastoquinone + NADPH + (n+1) H(+)(in) = a plastoquinol + NADP(+) + n H(+)(out). Its function is as follows. NDH shuttles electrons from NAD(P)H:plastoquinone, via FMN and iron-sulfur (Fe-S) centers, to quinones in the photosynthetic chain and possibly in a chloroplast respiratory chain. The immediate electron acceptor for the enzyme in this species is believed to be plastoquinone. Couples the redox reaction to proton translocation, and thus conserves the redox energy in a proton gradient. The protein is NAD(P)H-quinone oxidoreductase subunit 6, chloroplastic (ndhG) of Saccharum hybrid (Sugarcane).